The chain runs to 241 residues: Ribonuclease PH (241 aa).

Phosphate-binding positions include arginine 89 and 127–129 (GTR).

It belongs to the RNase PH family. As to quaternary structure, homohexameric ring arranged as a trimer of dimers.

The catalysed reaction is tRNA(n+1) + phosphate = tRNA(n) + a ribonucleoside 5'-diphosphate. Phosphorolytic 3'-5' exoribonuclease that plays an important role in tRNA 3'-end maturation. Removes nucleotide residues following the 3'-CCA terminus of tRNAs; can also add nucleotides to the ends of RNA molecules by using nucleoside diphosphates as substrates, but this may not be physiologically important. Probably plays a role in initiation of 16S rRNA degradation (leading to ribosome degradation) during starvation. This chain is Ribonuclease PH, found in Xanthomonas oryzae pv. oryzae (strain MAFF 311018).